The following is a 122-amino-acid chain: Protein GL2-INTERACTING REPRESSOR 1 (122 aa).

Over residues 1–10 the composition is skewed to basic and acidic residues; sequence MSRRSPKLEL. The tract at residues 1-62 is disordered; the sequence is MSRRSPKLEL…PSVRYSTSPE (62 aa). The EAR signature appears at 7 to 12; sequence KLELKL. Residues 27 to 46 show a composition bias toward low complexity; it reads SPSRSATTSPTSPPSSCVSS. A compositionally biased stretch (polar residues) spans 47–62; that stretch reads EMNQDEPSVRYSTSPE.

Interacts with GL2. Interacts with TPL. As to expression, expressed in root and shoot meristems.

It localises to the nucleus. In terms of biological role, acts as a negative regulator of root hair development redundantly with GIR2. GIR1 and GIR2 may function as adapter proteins that associate with GL2 and participate in the control of root hair formation. GIR1 and GIR2 may function as adapter proteins that associate with TPL and participate in the repression of root gene expression. This Arabidopsis thaliana (Mouse-ear cress) protein is Protein GL2-INTERACTING REPRESSOR 1.